Here is a 249-residue protein sequence, read N- to C-terminus: Bax inhibitor 1 (249 aa).

Transmembrane regions (helical) follow at residues 39–59, 65–85, 93–113, 119–139, 151–171, and 213–233; these read LVYL…YLHV, GMLT…VPVF, ILLA…KLAV, ILVT…CAAI, GLLS…SIFG, and HALT…VIML.

This sequence belongs to the BI1 family. As to expression, ubiquitous.

It localises to the membrane. Its function is as follows. Suppressor of apoptosis. The protein is Bax inhibitor 1 (BI1) of Oryza sativa subsp. japonica (Rice).